We begin with the raw amino-acid sequence, 428 residues long: Adenylosuccinate synthetase (428 aa).

Residues 12–18 (GDEGKGK) and 40–42 (GHT) contribute to the GTP site. Aspartate 13 functions as the Proton acceptor in the catalytic mechanism. Positions 13 and 40 each coordinate Mg(2+). IMP-binding positions include 13 to 16 (DEGK), 38 to 41 (NAGH), threonine 129, arginine 143, glutamine 224, threonine 239, and arginine 303. Histidine 41 acts as the Proton donor in catalysis. Residue 299–305 (VTTGRIR) participates in substrate binding. GTP contacts are provided by residues arginine 305, 331–333 (KVD), and 410–412 (AYG).

This sequence belongs to the adenylosuccinate synthetase family. As to quaternary structure, homodimer. Mg(2+) serves as cofactor.

It is found in the cytoplasm. It carries out the reaction IMP + L-aspartate + GTP = N(6)-(1,2-dicarboxyethyl)-AMP + GDP + phosphate + 2 H(+). It functions in the pathway purine metabolism; AMP biosynthesis via de novo pathway; AMP from IMP: step 1/2. In terms of biological role, plays an important role in the de novo pathway of purine nucleotide biosynthesis. Catalyzes the first committed step in the biosynthesis of AMP from IMP. This chain is Adenylosuccinate synthetase, found in Francisella philomiragia subsp. philomiragia (strain ATCC 25017 / CCUG 19701 / FSC 153 / O#319-036).